Reading from the N-terminus, the 562-residue chain is Potassium-transporting ATPase potassium-binding subunit (562 aa).

Helical transmembrane passes span 6–26 (FLLIASFMVVLFVLSRPLGGF), 63–83 (ALAILCFNLLGIVLLFVLLMA), 132–152 (GLTVQNFLSAATGIAVAFALI), 175–195 (LYVLLPIALIIALIFVSQGVL), 253–273 (FVQMLAIFLIPCALCFAFGQV), 283–303 (LIWAMSLIFIVAVVVVMYAEL), 327–347 (FGILATSLYAVVTTAASCGAV), 356–376 (ALGGMIPLWLMQIGEVVFGGV), 379–399 (GLYGMLLFVLLTVFIAGLMIG), 416–436 (MTALAILVTPTIVLLGTALAL), 483–503 (LLLAAAMFIGRFGVILPVLAI), and 526–546 (LFIGLLIGTVLLVGALTFIPA).

This sequence belongs to the KdpA family. As to quaternary structure, the system is composed of three essential subunits: KdpA, KdpB and KdpC.

It localises to the cell inner membrane. Its function is as follows. Part of the high-affinity ATP-driven potassium transport (or Kdp) system, which catalyzes the hydrolysis of ATP coupled with the electrogenic transport of potassium into the cytoplasm. This subunit binds the periplasmic potassium ions and delivers the ions to the membrane domain of KdpB through an intramembrane tunnel. This is Potassium-transporting ATPase potassium-binding subunit from Yersinia pseudotuberculosis serotype O:1b (strain IP 31758).